The chain runs to 507 residues: Inactive alanine aminotransferase (507 aa).

A173, S174, Y199, N255, and S324 together coordinate pyridoxal 5'-phosphate. K327 is subject to N6-(pyridoxal phosphate)lysine. R336 lines the pyridoxal 5'-phosphate pocket.

It belongs to the class-I pyridoxal-phosphate-dependent aminotransferase family. Alanine aminotransferase subfamily. In terms of assembly, homodimer. Pyridoxal 5'-phosphate serves as cofactor.

Its subcellular location is the cytoplasm. The protein localises to the nucleus. Inactive alanine aminotransferase. Forms a catalytically active Schiff base with PLP, but lacks alanine transaminase activity, probably due to an altered structural conformation of the dimeric enzyme. This suggests this protein may have a yet undiscovered physiological function. In Saccharomyces cerevisiae (strain ATCC 204508 / S288c) (Baker's yeast), this protein is Inactive alanine aminotransferase (ALT2).